A 92-amino-acid chain; its full sequence is Small integral membrane protein 12 (92 aa).

A helical membrane pass occupies residues 15–34 (YVTFPVAFVVGAVGYHLEWF).

This sequence belongs to the SMIM12 family.

The protein localises to the membrane. This Canis lupus familiaris (Dog) protein is Small integral membrane protein 12 (SMIM12).